We begin with the raw amino-acid sequence, 1369 residues long: MTIHQGGNSVIDNVPYSLNTNVNDSIYSEKGTGRKDAEDHTPSKITDLEKNVDHSIPSFPENDPKNYSEFVNLNPPKRPDLEHTRGSSWHTASENVNDLAANDSTRVQTPEFITQTMEDENVEVPPLERDERDAAAAHTSKANRNSARQMWAQLMASVRKFKREDEKPILKENLPAINLFEAGIPASLPIAKHFIRDKSGQPVLPIITDLIKVSVLDVEPKHNRIHSTFTIQVEYGTGPHAIRWLIYRQLRDFINLHSHFLFFEFQHRFSGRRMKLPKFPKEVLPYLVKLRGYQKILYSNPSDQLIDETHSISDISWESHSQDGDRTTGQPRHANNGRKKHGNFWTIQGNTLGVYLQEMIHNLQFFPEVNVLYSFLEFSSLGLYLAGAGTFHGKEGFATLKRNYSPTQYMLCCNTTMMKTRSQPFWIIVSESCIILCDNMLSMQPADVFIWDVDFEITRKNFRKAHSKDTNEKIRLSHHSFKIKNRQKVMKLSVRSGRWLQQFINSVQVAQGLTAWCEIHRFDSFAPVRTNVAVQWMVDARDHMWNVSRAIKNAKRCIMIHGWWLSPELQMRRPYSMAHKWRIDRILNEKAHEGVMVYIMIYRNIDATIPIDSFHTKEHLQSLHPNIYVIRSPSHFRQNALFWAHHEKLVVVDDAITFIGGIDLCFGRYDTPQHILYDDKPVADKTGLCEQTWRGKDYSNARVHDFFDLTEPYKDMYDRLAVPRMGWHDVSMCIIGQPARDAARHFVQRWNYLIQCKKPARKTPLLIPPPDFTTDQLTDSQLTGTCEVQVLRSAGLWSLGLVDTVEQSIQNAYVTCIEKSEHFIYIENQFFVTSTTCEGTTIENRVGDALVERIIRAHKNNEKWRGVIMIPLLPGFEGQIDLQEGGSLRLIVECQYRSICHGEHSIFGRLNAKGIDGSKYLRFYGLRGWAHLGENHELVTEMIYVHAKILIADDRVAVIGSANINERSLLGNRDSEIAAVIRDTLTIDSKMDGKPYKVGKFAHTLRKRLMREHLGLETDVLEQREYNMDGLDRDTEWKRVEVWTPDEGNAINGSAYTAEELKMKYRSQSQFTTTPDILRKAEKSMKKLDQRVSLIPSSIEFNIKTQKDKVEFEKNYEKSKKGPDVIANALVGGIPLSLKTKEDSLYELSKFSQCGEDQRPMVLKDPDHLVPEPSRPHCGNGLVFYDDIPLLEVNPISGETIPKFDASSFEDPVCDEFFEDIWSKVASNNTTIYRHIFRCVPDDEMLTWESYNEWKKYGKRFKEEQARWRQEELSNLHETHEKSENDPKNPKAGSQGSGNTSASEDSKTEKPKTRTNNGLQVPDKRVVYDLLRGIRGQLVELPLKWMSTESNARNWLSSIDKIPPLEIYD.

2 disordered regions span residues 27 to 90 (YSEK…SSWH) and 318 to 340 (ESHSQDGDRTTGQPRHANNGRKK). The span at 31–53 (GTGRKDAEDHTPSKITDLEKNVD) shows a compositional bias: basic and acidic residues. Positions 208-379 (TDLIKVSVLD…NVLYSFLEFS (172 aa)) constitute a PX domain. PLD phosphodiesterase domains are found at residues 641–668 (LFWAHHEKLVVVDDAITFIGGIDLCFGR) and 941–968 (EMIYVHAKILIADDRVAVIGSANINERS). Over residues 1277-1289 (HETHEKSENDPKN) the composition is skewed to basic and acidic residues. A disordered region spans residues 1277 to 1320 (HETHEKSENDPKNPKAGSQGSGNTSASEDSKTEKPKTRTNNGLQ). Over residues 1292–1303 (AGSQGSGNTSAS) the composition is skewed to polar residues.

It belongs to the phospholipase D family.

Its subcellular location is the cytoplasm. It carries out the reaction a 1,2-diacyl-sn-glycero-3-phosphocholine + H2O = a 1,2-diacyl-sn-glycero-3-phosphate + choline + H(+). Activity is slightly stimulated by oleate. Its function is as follows. Required for meiosis and spore formation. Seems to be involved in the coordinate induction of late meiotic events. The protein is Phospholipase D1 (pld1) of Schizosaccharomyces pombe (strain 972 / ATCC 24843) (Fission yeast).